The primary structure comprises 1941 residues: Diacylglycerol kinase eta (1941 aa).

Positions 93-186 (SIIKEGYLLK…WLGSLKAATA (94 aa)) constitute a PH domain. 2 consecutive Phorbol-ester/DAG-type zinc fingers follow at residues 206–256 (HHHW…IANC) and 279–330 (PHQW…AIAC). Residues 361–497 (GNFSPLLVFV…DRWSIMVFEK (137 aa)) enclose the DAGKc domain. Disordered regions lie at residues 1030–1068 (TTTLCSEHMGPPKPPRKKSMSALSKSQIHPRRRNSSPPR), 1132–1164 (CNSNNNSNNNSNSNSNNNNHNDGNSNDEPETPT), 1215–1257 (LESA…PSSS), and 1276–1295 (RRHSSHAPSLAVREYDKDKD). Positions 1133 to 1155 (NSNNNSNNNSNSNSNNNNHNDGN) are enriched in low complexity. Residues 1878–1941 (WSVNEVVTWL…LQAIKDLSEN (64 aa)) form the SAM domain.

This sequence belongs to the eukaryotic diacylglycerol kinase family.

It is found in the cytoplasm. It carries out the reaction a 1,2-diacyl-sn-glycerol + ATP = a 1,2-diacyl-sn-glycero-3-phosphate + ADP + H(+). Phosphorylates diacylglycerol (DAG) to generate phosphatidic acid (PA). The chain is Diacylglycerol kinase eta from Drosophila grimshawi (Hawaiian fruit fly).